The following is a 169-amino-acid chain: Allophycocyanin subunit beta-18 (169 aa).

Asn72 is modified (N4-methylasparagine). Cys82 contributes to the (2R,3E)-phycocyanobilin binding site.

This sequence belongs to the phycobiliprotein family. Heterodimer of an alpha and a beta chain. Contains one covalently linked bilin chromophore.

It is found in the plastid. The protein localises to the chloroplast thylakoid membrane. Light-harvesting photosynthetic bile pigment-protein from the phycobiliprotein complex. Allophycocyanin has a maximum absorption at approximately 650 nanometers. The chain is Allophycocyanin subunit beta-18 (apcF) from Porphyra purpurea (Red seaweed).